The chain runs to 661 residues: UvrABC system protein B (661 aa).

One can recognise a Helicase ATP-binding domain in the interval 24-209 (NGLNKGYRFQ…IFPSYQDEGI (186 aa)). 37–44 (GVTGSGKT) contacts ATP. Residues 90-113 (YYDYYQPEAYVPTKDLYIEKSADI) carry the Beta-hairpin motif. Positions 430-594 (DLVNEIVQVK…IIKPLMEDIF (165 aa)) constitute a Helicase C-terminal domain. A UVR domain is found at 622 to 657 (EEYAALLEEEMYKAASELRYEDAARLRDELFKIKEE).

This sequence belongs to the UvrB family. In terms of assembly, forms a heterotetramer with UvrA during the search for lesions. Interacts with UvrC in an incision complex.

The protein localises to the cytoplasm. The UvrABC repair system catalyzes the recognition and processing of DNA lesions. A damage recognition complex composed of 2 UvrA and 2 UvrB subunits scans DNA for abnormalities. Upon binding of the UvrA(2)B(2) complex to a putative damaged site, the DNA wraps around one UvrB monomer. DNA wrap is dependent on ATP binding by UvrB and probably causes local melting of the DNA helix, facilitating insertion of UvrB beta-hairpin between the DNA strands. Then UvrB probes one DNA strand for the presence of a lesion. If a lesion is found the UvrA subunits dissociate and the UvrB-DNA preincision complex is formed. This complex is subsequently bound by UvrC and the second UvrB is released. If no lesion is found, the DNA wraps around the other UvrB subunit that will check the other stand for damage. This Fervidobacterium nodosum (strain ATCC 35602 / DSM 5306 / Rt17-B1) protein is UvrABC system protein B.